We begin with the raw amino-acid sequence, 298 residues long: MSETIRVATRSSRLAIIQTREVIELLERESPRDVEVEIVKTKSRGDVVRDRPLHKLGEKGVFVKEVDRLVLEGKADIAVHSAKDVPSVVDYPVDVAAVPPRRDPRECLVSRHGGLKELPRGATVGTSSPRRRAQILLERPDLKVEPMRGNVDTRVSKVRRREYDAAVLAKVGLDRLGMTSEVSEVYDPEEFVPPAGQGALMITCRKDDDRVKRLLEVVDDEKSRVEVETEKAVVRELGVGCSEPVGVHVRARDGDHVRLVLGLFEEDGSCGHVLKMRGSPEDVVREAVSQAREVLSDG.

S-(dipyrrolylmethanemethyl)cysteine is present on C241.

It belongs to the HMBS family. It depends on dipyrromethane as a cofactor.

It carries out the reaction 4 porphobilinogen + H2O = hydroxymethylbilane + 4 NH4(+). It functions in the pathway porphyrin-containing compound metabolism; protoporphyrin-IX biosynthesis; coproporphyrinogen-III from 5-aminolevulinate: step 2/4. Tetrapolymerization of the monopyrrole PBG into the hydroxymethylbilane pre-uroporphyrinogen in several discrete steps. This Methanopyrus kandleri (strain AV19 / DSM 6324 / JCM 9639 / NBRC 100938) protein is Probable porphobilinogen deaminase.